The primary structure comprises 115 residues: NADH-ubiquinone oxidoreductase chain 3 (115 aa).

Transmembrane regions (helical) follow at residues 1–21 (MMML…VMLL), 58–78 (IAVI…IVII), and 84–104 (IMVW…GLYY).

Belongs to the complex I subunit 3 family.

Its subcellular location is the mitochondrion membrane. It carries out the reaction a ubiquinone + NADH + 5 H(+)(in) = a ubiquinol + NAD(+) + 4 H(+)(out). Functionally, core subunit of the mitochondrial membrane respiratory chain NADH dehydrogenase (Complex I) that is believed to belong to the minimal assembly required for catalysis. Complex I functions in the transfer of electrons from NADH to the respiratory chain. The immediate electron acceptor for the enzyme is believed to be ubiquinone. The polypeptide is NADH-ubiquinone oxidoreductase chain 3 (ND3) (Locusta migratoria (Migratory locust)).